Reading from the N-terminus, the 465-residue chain is UDP-N-acetylmuramate--L-alanine ligase (465 aa).

115–121 (GTHGKTT) contributes to the ATP binding site.

This sequence belongs to the MurCDEF family.

The protein localises to the cytoplasm. It carries out the reaction UDP-N-acetyl-alpha-D-muramate + L-alanine + ATP = UDP-N-acetyl-alpha-D-muramoyl-L-alanine + ADP + phosphate + H(+). It participates in cell wall biogenesis; peptidoglycan biosynthesis. In terms of biological role, cell wall formation. This Renibacterium salmoninarum (strain ATCC 33209 / DSM 20767 / JCM 11484 / NBRC 15589 / NCIMB 2235) protein is UDP-N-acetylmuramate--L-alanine ligase.